A 640-amino-acid polypeptide reads, in one-letter code: 1-deoxy-D-xylulose-5-phosphate synthase (640 aa).

Residues His79 and 120–122 contribute to the thiamine diphosphate site; that span reads AHA. Position 151 (Asp151) interacts with Mg(2+). Thiamine diphosphate is bound by residues 152 to 153, Asn180, Tyr287, and Glu369; that span reads GS. Asn180 contacts Mg(2+).

The protein belongs to the transketolase family. DXPS subfamily. As to quaternary structure, homodimer. It depends on Mg(2+) as a cofactor. Requires thiamine diphosphate as cofactor.

It carries out the reaction D-glyceraldehyde 3-phosphate + pyruvate + H(+) = 1-deoxy-D-xylulose 5-phosphate + CO2. It participates in metabolic intermediate biosynthesis; 1-deoxy-D-xylulose 5-phosphate biosynthesis; 1-deoxy-D-xylulose 5-phosphate from D-glyceraldehyde 3-phosphate and pyruvate: step 1/1. Functionally, catalyzes the acyloin condensation reaction between C atoms 2 and 3 of pyruvate and glyceraldehyde 3-phosphate to yield 1-deoxy-D-xylulose-5-phosphate (DXP). This chain is 1-deoxy-D-xylulose-5-phosphate synthase, found in Hyphomonas neptunium (strain ATCC 15444).